The sequence spans 453 residues: Ribulose bisphosphate carboxylase large chain (453 aa).

The propeptide occupies 1-2 (MS). Position 3 is an N-acetylproline (Pro-3). Lys-14 carries the N6,N6,N6-trimethyllysine modification. Residues Asn-123 and Thr-173 each coordinate substrate. Lys-175 acts as the Proton acceptor in catalysis. Position 177 (Lys-177) interacts with substrate. Mg(2+)-binding residues include Lys-201, Asp-203, and Glu-204. At Lys-201 the chain carries N6-carboxylysine. His-294 (proton acceptor) is an active-site residue. Arg-295, His-327, and Ser-379 together coordinate substrate.

The protein belongs to the RuBisCO large chain family. Type I subfamily. In terms of assembly, heterohexadecamer of 8 large chains and 8 small chains; disulfide-linked. The disulfide link is formed within the large subunit homodimers. It depends on Mg(2+) as a cofactor. The disulfide bond which can form in the large chain dimeric partners within the hexadecamer appears to be associated with oxidative stress and protein turnover.

It is found in the plastid. The protein localises to the chloroplast. The catalysed reaction is 2 (2R)-3-phosphoglycerate + 2 H(+) = D-ribulose 1,5-bisphosphate + CO2 + H2O. It catalyses the reaction D-ribulose 1,5-bisphosphate + O2 = 2-phosphoglycolate + (2R)-3-phosphoglycerate + 2 H(+). Its function is as follows. RuBisCO catalyzes two reactions: the carboxylation of D-ribulose 1,5-bisphosphate, the primary event in carbon dioxide fixation, as well as the oxidative fragmentation of the pentose substrate in the photorespiration process. Both reactions occur simultaneously and in competition at the same active site. The polypeptide is Ribulose bisphosphate carboxylase large chain (Galium lucidum).